The following is a 450-amino-acid chain: Phosphoglucosamine mutase (450 aa).

The Phosphoserine intermediate role is filled by S107. Mg(2+)-binding residues include S107, D246, D248, and D250. S107 carries the post-translational modification Phosphoserine.

This sequence belongs to the phosphohexose mutase family. It depends on Mg(2+) as a cofactor. Activated by phosphorylation.

It carries out the reaction alpha-D-glucosamine 1-phosphate = D-glucosamine 6-phosphate. Its function is as follows. Catalyzes the conversion of glucosamine-6-phosphate to glucosamine-1-phosphate. In Dechloromonas aromatica (strain RCB), this protein is Phosphoglucosamine mutase.